A 660-amino-acid polypeptide reads, in one-letter code: Pro-secreted protein ORF2 (660 aa).

The signal sequence occupies residues methionine 1–alanine 19. Disordered regions lie at residues proline 18 to aspartate 44 and proline 64 to proline 123. A Nuclear localization signal motif is present at residues arginine 28 to arginine 33. Over residues glutamine 92–alanine 116 the composition is skewed to low complexity. N-linked (GlcNAc...) asparagine; by host glycosylation is found at asparagine 137 and asparagine 310. The particle formation stretch occupies residues isoleucine 368–glutamine 394. The N-linked (GlcNAc...) asparagine; by host glycan is linked to asparagine 562. The oligomerization stretch occupies residues threonine 585 to leucine 610.

This sequence belongs to the hepevirus capsid protein family. In terms of assembly, homodimer. As to quaternary structure, self-assembles to form the capsid. The capsid is dominated by dimers that define the 30 morphological units. Interacts with phosphorylated protein ORF3. Interacts with host TMEM134. Interacts with host ASGR1 and ASGR2; these interactions facilitate infection of host hepatocytes. Cleaved by host proteases in the N-terminus. Post-translationally, N-glycosylated. In terms of processing, not N-glycosylated. The C-terminus of the capsid protein ORF2 is truncated in non-enveloped virions shedded in feces, probably due to host proteases.

The protein resides in the secreted. The protein localises to the virion. It localises to the host cytoplasm. Its subcellular location is the host endoplasmic reticulum. It is found in the host Golgi apparatus. The protein resides in the host cell surface. The protein localises to the host nucleus. Its function is as follows. Plays a role in the inhibition of host antibody-mediated neutralization without blocking viral cell entry. In terms of biological role, forms an icosahedral capsid with a T=1 symmetry and a 34 nm diameter. The capsid is composed of 60 copies linked to each other. Binds to the 5' end of the genomic RNA to mediate genome encapsidation. Binds to heparin surface proteoglycans (HSPGs) to mediate viral entry. Additionally, the interactions with host ASGR1 and ASGR2 facilitate viral infection of hepatocytes. Inhibits IFN production by blocking host TBK1-induced IRF3 phosphorylation. The nuclear form probably modulates host gene expression. This Homo sapiens (Human) protein is Pro-secreted protein ORF2.